The following is a 505-amino-acid chain: Cobyric acid synthase (505 aa).

Residues 260–453 form the GATase cobBQ-type domain; the sequence is RIAVAAIYFP…FHGIIDEPEV (194 aa). Catalysis depends on Cys341, which acts as the Nucleophile. His445 is a catalytic residue.

It belongs to the CobB/CobQ family. CobQ subfamily.

It participates in cofactor biosynthesis; adenosylcobalamin biosynthesis. Its function is as follows. Catalyzes amidations at positions B, D, E, and G on adenosylcobyrinic A,C-diamide. NH(2) groups are provided by glutamine, and one molecule of ATP is hydrogenolyzed for each amidation. The chain is Cobyric acid synthase from Chlorobium phaeobacteroides (strain DSM 266 / SMG 266 / 2430).